We begin with the raw amino-acid sequence, 1405 residues long: DNA-directed RNA polymerase subunit beta' (1405 aa).

Cys-70, Cys-72, Cys-85, and Cys-88 together coordinate Zn(2+). Asp-460, Asp-462, and Asp-464 together coordinate Mg(2+). Zn(2+) is bound by residues Cys-814, Cys-888, Cys-895, and Cys-898.

It belongs to the RNA polymerase beta' chain family. In terms of assembly, the RNAP catalytic core consists of 2 alpha, 1 beta, 1 beta' and 1 omega subunit. When a sigma factor is associated with the core the holoenzyme is formed, which can initiate transcription. It depends on Mg(2+) as a cofactor. Zn(2+) serves as cofactor.

The catalysed reaction is RNA(n) + a ribonucleoside 5'-triphosphate = RNA(n+1) + diphosphate. DNA-dependent RNA polymerase catalyzes the transcription of DNA into RNA using the four ribonucleoside triphosphates as substrates. This Shewanella sp. (strain ANA-3) protein is DNA-directed RNA polymerase subunit beta'.